The chain runs to 129 residues: Protein NrdI (129 aa).

The protein belongs to the NrdI family.

Its function is as follows. Probably involved in ribonucleotide reductase function. The sequence is that of Protein NrdI from Macrococcus caseolyticus (strain JCSC5402) (Macrococcoides caseolyticum).